We begin with the raw amino-acid sequence, 49 residues long: Large ribosomal subunit protein bL33B (49 aa).

This sequence belongs to the bacterial ribosomal protein bL33 family.

This is Large ribosomal subunit protein bL33B (rpmG2) from Lactococcus lactis subsp. lactis (strain IL1403) (Streptococcus lactis).